The chain runs to 175 residues: Protein tyrosine phosphatase PRL-1 (175 aa).

One can recognise a Tyrosine-protein phosphatase domain in the interval 15–172; it reads KPSRVLFHFL…YKRRHQGAGC (158 aa). Residues cysteine 53 and cysteine 114 are joined by a disulfide bond. Aspartate 76 functions as the Proton donor in the catalytic mechanism. Cysteine 114 (phosphocysteine intermediate) is an active-site residue. 116–120 provides a ligand contact to substrate; sequence AGLGR. Position 172 is a cysteine methyl ester (cysteine 172). A lipid anchor (S-farnesyl cysteine) is attached at cysteine 172. A propeptide spans 173 to 175 (removed in mature form); it reads VIM.

This sequence belongs to the protein-tyrosine phosphatase family.

Its subcellular location is the cytoplasm. It localises to the mitochondrion matrix. The protein localises to the kinetoplast. The protein resides in the secreted. It is found in the extracellular exosome. The catalysed reaction is O-phospho-L-tyrosyl-[protein] + H2O = L-tyrosyl-[protein] + phosphate. With respect to regulation, activated in a reduced environment which promotes the reduction of the disulfide bond between the regulatory Cys-53 and catalytic Cys-114 residues. In terms of biological role, has protein tyrosine phosphatase activity and may act as a virulence factor to support intracellular survival in host macrophages. This is Protein tyrosine phosphatase PRL-1 from Leishmania major.